Here is a 466-residue protein sequence, read N- to C-terminus: Glutamate--tRNA ligase (466 aa).

The short motif at 10–20 (PSPTGYLHVGG) is the 'HIGH' region element. Zn(2+)-binding residues include Cys99, Cys101, Cys126, and Asp128. The 'KMSKS' region motif lies at 237 to 241 (RLSKR). Lys240 lines the ATP pocket.

The protein belongs to the class-I aminoacyl-tRNA synthetase family. Glutamate--tRNA ligase type 1 subfamily. In terms of assembly, monomer. The cofactor is Zn(2+).

It is found in the cytoplasm. The enzyme catalyses tRNA(Glu) + L-glutamate + ATP = L-glutamyl-tRNA(Glu) + AMP + diphosphate. Catalyzes the attachment of glutamate to tRNA(Glu) in a two-step reaction: glutamate is first activated by ATP to form Glu-AMP and then transferred to the acceptor end of tRNA(Glu). The chain is Glutamate--tRNA ligase from Geobacter sulfurreducens (strain ATCC 51573 / DSM 12127 / PCA).